Here is a 185-residue protein sequence, read N- to C-terminus: Lectin B4 (185 aa).

Residue Asn-48 is glycosylated (N-linked (GlcNAc...) asparagine). Mn(2+)-binding residues include Glu-111 and Asp-113. Ca(2+) contacts are provided by Asp-113, Tyr-115, Asn-117, and Asp-120. Asp-120 is a binding site for Mn(2+). Residue Asn-122 is glycosylated (N-linked (GlcNAc...) asparagine). A Mn(2+)-binding site is contributed by His-125.

It belongs to the leguminous lectin family. In terms of assembly, homo- or heterotetramer. V.villosa isolectins are composed of either two subunits a and two subunits B (A2B2), four subunits A (A4), or four subunits B (B4). The predominant form, isolectin B4, has no A1 erythrocyte agglutinating activity.

Functionally, N-acetyl-D-galactosamine specific lectin. Binds the Tn determinant (GalNAc-alpha-O-Ser/Thr) of the tumor-associated glycopeptide. Could be required for agglutinating cells such as Tn-exposed erythrocytes. This chain is Lectin B4, found in Vicia villosa (Hairy vetch).